An 82-amino-acid polypeptide reads, in one-letter code: RNA-binding protein Hfq (82 aa).

A Sm domain is found at 10–70 (DLFLNTVRKS…ISTIMPSQPV (61 aa)).

Belongs to the Hfq family. In terms of assembly, homohexamer.

RNA chaperone that binds small regulatory RNA (sRNAs) and mRNAs to facilitate mRNA translational regulation in response to envelope stress, environmental stress and changes in metabolite concentrations. Also binds with high specificity to tRNAs. This is RNA-binding protein Hfq from Chelativorans sp. (strain BNC1).